A 247-amino-acid chain; its full sequence is Cell division protein ZapD (247 aa).

This sequence belongs to the ZapD family. Interacts with FtsZ.

It localises to the cytoplasm. Its function is as follows. Cell division factor that enhances FtsZ-ring assembly. Directly interacts with FtsZ and promotes bundling of FtsZ protofilaments, with a reduction in FtsZ GTPase activity. In Klebsiella pneumoniae subsp. pneumoniae (strain ATCC 700721 / MGH 78578), this protein is Cell division protein ZapD.